Consider the following 402-residue polypeptide: Secreted RxLR effector protein 73 (402 aa).

The first 23 residues, 1 to 23 (MRLLHVVVATVSLTGAITSLIAA), serve as a signal peptide directing secretion. Asn27 carries N-linked (GlcNAc...) asparagine glycosylation. The RxLR signature appears at 104 to 107 (RVLR). N-linked (GlcNAc...) asparagine glycosylation is found at Asn111, Asn134, Asn143, Asn165, and Asn286.

This sequence belongs to the RxLR effector family.

It localises to the secreted. The protein localises to the host cell. Functionally, secreted effector that completely suppresses the host cell death induced by cell death-inducing proteins. The protein is Secreted RxLR effector protein 73 of Plasmopara viticola (Downy mildew of grapevine).